A 161-amino-acid chain; its full sequence is Regulatory protein RecX (161 aa).

The protein belongs to the RecX family.

Its subcellular location is the cytoplasm. In terms of biological role, modulates RecA activity. This is Regulatory protein RecX from Halorhodospira halophila (strain DSM 244 / SL1) (Ectothiorhodospira halophila (strain DSM 244 / SL1)).